Reading from the N-terminus, the 347-residue chain is D-alanine--D-alanine ligase (347 aa).

The ATP-grasp domain maps to 131-333; it reads KRVLESAGIA…YPELIERLVD (203 aa). Residue 161–216 coordinates ATP; that stretch reads EEKLAYPVFTKPSNMGSSVGISKSENQEELRQALKLAFRYDSRVLVEQGVNAREIE. Aspartate 287, glutamate 300, and asparagine 302 together coordinate Mg(2+).

This sequence belongs to the D-alanine--D-alanine ligase family. Mg(2+) serves as cofactor. Mn(2+) is required as a cofactor.

Its subcellular location is the cytoplasm. It catalyses the reaction 2 D-alanine + ATP = D-alanyl-D-alanine + ADP + phosphate + H(+). It participates in cell wall biogenesis; peptidoglycan biosynthesis. Cell wall formation. The polypeptide is D-alanine--D-alanine ligase (Streptococcus pneumoniae serotype 19F (strain G54)).